A 287-amino-acid polypeptide reads, in one-letter code: Small ribosomal subunit protein uS2 (287 aa).

A disordered region spans residues 233-287 (HKAPQDDIEPMAEWEKQLLQSGDSSGETRPISGTDRPLDGDLSKGPAPQDEELSD). The segment covering 250–259 (LLQSGDSSGE) has biased composition (polar residues).

It belongs to the universal ribosomal protein uS2 family.

The chain is Small ribosomal subunit protein uS2 from Tropheryma whipplei (strain TW08/27) (Whipple's bacillus).